A 617-amino-acid polypeptide reads, in one-letter code: 1-deoxy-D-xylulose-5-phosphate synthase (617 aa).

Thiamine diphosphate contacts are provided by residues H76 and 117 to 119 (GHS). D148 lines the Mg(2+) pocket. Residues 149 to 150 (GA), N177, Y285, and E366 each bind thiamine diphosphate. Residue N177 coordinates Mg(2+).

The protein belongs to the transketolase family. DXPS subfamily. Homodimer. Requires Mg(2+) as cofactor. Thiamine diphosphate is required as a cofactor.

The enzyme catalyses D-glyceraldehyde 3-phosphate + pyruvate + H(+) = 1-deoxy-D-xylulose 5-phosphate + CO2. It functions in the pathway metabolic intermediate biosynthesis; 1-deoxy-D-xylulose 5-phosphate biosynthesis; 1-deoxy-D-xylulose 5-phosphate from D-glyceraldehyde 3-phosphate and pyruvate: step 1/1. Functionally, catalyzes the acyloin condensation reaction between C atoms 2 and 3 of pyruvate and glyceraldehyde 3-phosphate to yield 1-deoxy-D-xylulose-5-phosphate (DXP). The chain is 1-deoxy-D-xylulose-5-phosphate synthase from Histophilus somni (strain 2336) (Haemophilus somnus).